The chain runs to 495 residues: Sugar phosphate exchanger 3 (495 aa).

Residues 16–36 (FSHHHMVVFLLTFFSYSLLHA) form a helical membrane-spanning segment. The N-linked (GlcNAc...) asparagine glycan is linked to asparagine 58. Transmembrane regions (helical) follow at residues 82 to 102 (TLFL…GLFI), 114 to 134 (WVLS…GTLT), 148 to 168 (LWIV…AVMG), 178 to 198 (VVFG…ACLA), and 210 to 230 (FLVT…GLLV). N-linked (GlcNAc...) asparagine glycosylation is present at asparagine 267. Transmembrane regions (helical) follow at residues 298-318 (LAYA…PFYL), 334-354 (IWYD…SDML), 358-378 (APVL…YSRS), 387-407 (LLMA…SSAI), 429-449 (GIVD…VSLI), and 453-473 (LGWM…VLFI).

The protein belongs to the major facilitator superfamily. Organophosphate:Pi antiporter (OPA) (TC 2.A.1.4) family. Interacts with ATRAID; the interaction is direct and both proteins are mutually dependent for their stability. Post-translationally, glycosylated.

The protein localises to the endoplasmic reticulum membrane. It localises to the lysosome membrane. Functionally, unlike the other SLC37 members, lacks glucose-6-phosphate antiporter activity. In osteoclasts, forms a transporter complex with ATRAID for nitrogen-containing-bisphophonates (N-BPs) required for releasing N-BP molecules that have trafficked to lysosomes through fluid-phase endocytosis into the cytosol. The protein is Sugar phosphate exchanger 3 (SLC37A3) of Bos taurus (Bovine).